The following is a 1806-amino-acid chain: Collagen alpha-1(XI) chain (1806 aa).

The signal sequence occupies residues 1–35; sequence MEPWSSRWKTKRWLWDFTVTTLALTFLFQAREVRG. A propeptide spans 36–511 (N-terminal propeptide); sequence AAPVDVLKAL…DGSKGPTISA (476 aa). Disulfide bonds link Cys61–Cys243 and Cys182–Cys236. The Laminin G-like domain occupies 71-243; the sequence is DTAYRVSKQA…DYCEHYSPDC (173 aa). The tract at residues 230 to 419 is nonhelical region; sequence KAAYDYCEHY…DITETSINGH (190 aa). Residues 420–508 form a triple-helical region (interrupted) region; that stretch reads GAYGEKGQKG…YGGDGSKGPT (89 aa). Positions 439–508 are disordered; it reads LVEGPPGPAG…YGGDGSKGPT (70 aa). Residues 442–490 enclose the Collagen-like 1 domain; that stretch reads GPPGPAGPAGIMGPPGLQGPTGPPGDPGDRGPPGRPGLPGADGLPGPPG. Low complexity-rich tracts occupy residues 449 to 461 and 479 to 496; these read PAGIMGPPGLQGP and LPGADGLPGPPGTMLMLP. The short nonhelical segment stretch occupies residues 509–511; the sequence is ISA. The interval 512-528 is telopeptide; it reads QEAQAQAILQQARIALR. Residues 528–1563 form a disordered region; it reads RGPPGPMGLT…TRRHTEGMQA (1036 aa). The interval 529–1542 is triple-helical region; the sequence is GPPGPMGLTG…PGSPGPPGEV (1014 aa). Collagen-like domains are found at residues 532 to 586, 583 to 641, 616 to 674, and 643 to 699; these read GPMG…GADG, GADG…EIGP, GERG…VDGP, and GLPG…PGPQ. 2 stretches are compositionally biased toward gly residues: residues 541-550 and 583-592; these read GPVGGPGSSG and GADGGRGMPG. Lys612 carries the allysine modification. Positions 641–662 are enriched in low complexity; the sequence is PRGLPGEAGPRGLLGPRGTPGA. Over residues 699–710 the composition is skewed to pro residues; that stretch reads QGLPGPQGPIGP. Residues 717–728 are compositionally biased toward low complexity; it reads QGKPGLAGLPGA. Over residues 807–816 the composition is skewed to basic and acidic residues; the sequence is RGEDGPEGPK. Composition is skewed to low complexity over residues 875–903, 918–927, 941–960, 971–981, 1032–1041, and 1058–1074; these read KPGPRGQRGPTGPRGSRGARGPTGKPGPK, RGPQGPQGPV, KDGLPGHPGQRGETGFQGKT, PQGPTGETGPI, RGLPGAQGAP, and SPGERGSAGTAGPIGLP. Residues 1076-1085 show a composition bias toward pro residues; sequence RPGPQGPPGP. Residues 1086 to 1110 are compositionally biased toward low complexity; that stretch reads AGEKGAPGEKGPQGPAGRDGVQGPV. Over residues 1162-1171 the composition is skewed to gly residues; that stretch reads GIAGGDGEPG. Pro residues-rich tracts occupy residues 1218–1229 and 1343–1362; these read MGPPGPPGPRGP and QPGPPGPSGEAGPPGPPGKR. 2 stretches are compositionally biased toward low complexity: residues 1385 to 1394 and 1419 to 1428; these read AEGPPGKTGP and QGLPGAAGQD. 3 Collagen-like domains span residues 1393–1450, 1429–1487, and 1483–1541; these read GPVG…GSKG, GPPG…AKGD, and GAKG…PPGE. Positions 1430-1439 are enriched in pro residues; the sequence is PPGPMGPPGL. An Allysine modification is found at Lys1452. Low complexity predominate over residues 1455-1464; the sequence is PGLIGLIGPP. Over residues 1483-1492 the composition is skewed to gly residues; it reads GAKGDGGIPG. Pro residues-rich tracts occupy residues 1493–1509 and 1530–1539; these read PAGPLGPPGPPGLPGPQ and PGPPGSPGPP. The tract at residues 1543–1563 is nonhelical region (C-terminal); it reads IQPLPILSSKKTRRHTEGMQA. Residues 1564–1806 constitute a propeptide, C-terminal propeptide; that stretch reads DADDNILDYS…FEVGPVCFLG (243 aa). A Fibrillar collagen NC1 domain is found at 1577–1805; it reads EEIFGSLNSL…GFEVGPVCFL (229 aa). Cys1607 and Cys1639 are disulfide-bonded. Ca(2+) is bound by residues Asp1625, Asn1627, Gln1628, Cys1630, and Asp1633. N-linked (GlcNAc...) asparagine glycosylation is present at Asn1640. Intrachain disulfides connect Cys1648/Cys1803 and Cys1714/Cys1757.

This sequence belongs to the fibrillar collagen family. As to quaternary structure, trimers composed of three different chains: alpha 1(XI), alpha 2(XI), and alpha 3(XI). Alpha 3(XI) is a post-translational modification of alpha 1(II). Alpha 1(V) can also be found instead of alpha 3(XI)=1(II). In terms of processing, prolines at the third position of the tripeptide repeating unit (G-X-Y) are hydroxylated in some or all of the chains. N-glycosylated. In terms of tissue distribution, cartilage, placenta and some tumor or virally transformed cell lines. Isoforms using exon IIA or IIB are found in the cartilage while isoforms using only exon IIB are found in the tendon.

The protein resides in the secreted. The protein localises to the extracellular space. It is found in the extracellular matrix. May play an important role in fibrillogenesis by controlling lateral growth of collagen II fibrils. The sequence is that of Collagen alpha-1(XI) chain (COL11A1) from Homo sapiens (Human).